The chain runs to 285 residues: RING finger protein 223 (285 aa).

The RING-type zinc finger occupies 81-132; it reads CSICFSGYDNIFKTPKELSCSHVFCLECLARLAAAQPAGRSGREAVPCPFCR. A helical membrane pass occupies residues 230–250; it reads VALVSVLLLVLFCVILWPVQC.

Its subcellular location is the membrane. The sequence is that of RING finger protein 223 (Rnf223) from Mus musculus (Mouse).